Consider the following 159-residue polypeptide: Ribosomal RNA large subunit methyltransferase H (159 aa).

S-adenosyl-L-methionine contacts are provided by Leu76 and Gly108.

Belongs to the RNA methyltransferase RlmH family. As to quaternary structure, homodimer.

It is found in the cytoplasm. The catalysed reaction is pseudouridine(1915) in 23S rRNA + S-adenosyl-L-methionine = N(3)-methylpseudouridine(1915) in 23S rRNA + S-adenosyl-L-homocysteine + H(+). Specifically methylates the pseudouridine at position 1915 (m3Psi1915) in 23S rRNA. In Lactiplantibacillus plantarum (strain ATCC BAA-793 / NCIMB 8826 / WCFS1) (Lactobacillus plantarum), this protein is Ribosomal RNA large subunit methyltransferase H.